A 179-amino-acid chain; its full sequence is Interferon lambda-4 (179 aa).

Positions 1–21 (MRPSVWAAVAAGLWVLCTVIA) are cleaved as a signal peptide. Residues 130-149 (SSRKVPGAQKRRHKPRRADS) form a disordered region.

Belongs to the lambda interferon family.

It localises to the cytoplasm. The protein localises to the secreted. In terms of biological role, cytokine that may trigger an antiviral response activating the JAK-STAT pathway and up-regulating specifically some interferon-stimulated genes. The polypeptide is Interferon lambda-4 (IFNL4) (Homo sapiens (Human)).